A 305-amino-acid polypeptide reads, in one-letter code: Polyamine aminopropyltransferase 2 (305 aa).

Residues 7-242 (WRFVAEWTSE…GLWGFVAASD (236 aa)) enclose the PABS domain. Gln-36 serves as a coordination point for S-methyl-5'-thioadenosine. Residues His-67 and Glu-91 each contribute to the spermidine site. S-methyl-5'-thioadenosine is bound by residues Asp-111 and 143–144 (DG). Asp-161 serves as the catalytic Proton acceptor. Pro-170 contacts S-methyl-5'-thioadenosine.

This sequence belongs to the spermidine/spermine synthase family. As to quaternary structure, homodimer or homotetramer.

The protein resides in the cytoplasm. It catalyses the reaction S-adenosyl 3-(methylsulfanyl)propylamine + propane-1,3-diamine = norspermidine + S-methyl-5'-thioadenosine + H(+). Involved in the biosynthesis of polyamines which are thought to support the growth of thermophilic microorganisms under high-temperature conditions. It seems that long-chain and branched-chain of polyamines effectively stabilize DNA and RNA, respectively. Catalyzes the irreversible transfer of a propylamine group from the amino donor S-adenosylmethioninamine (decarboxy-AdoMet) to 1,3-diaminopropane to yield sym-norspermidine (bis(3-aminopropyl)amine). It can also synthesize thermospermine from spermidine with a very low activity. The chain is Polyamine aminopropyltransferase 2 from Hyperthermus butylicus (strain DSM 5456 / JCM 9403 / PLM1-5).